Here is a 340-residue protein sequence, read N- to C-terminus: Probable HTH-type transcriptional regulator EndR (340 aa).

Positions 1-58 (MVTTMKEVAERAGVSKSTVSQFLQKRYNYMSENTKKKIEQAIEDLSYIPNEVARSLKQ) constitute an HTH lacI-type domain. Residues 5–24 (MKEVAERAGVSKSTVSQFLQ) constitute a DNA-binding region (H-T-H motif).

In terms of biological role, putative repressor of the endoglucanase operon. The polypeptide is Probable HTH-type transcriptional regulator EndR (endR) (Paenibacillus polymyxa (Bacillus polymyxa)).